The primary structure comprises 339 residues: Uroporphyrinogen decarboxylase (339 aa).

Residues 21 to 25 (RQAGR), Asp-71, Tyr-147, Ser-202, and His-315 contribute to the substrate site.

It belongs to the uroporphyrinogen decarboxylase family. In terms of assembly, homodimer.

The protein resides in the cytoplasm. The enzyme catalyses uroporphyrinogen III + 4 H(+) = coproporphyrinogen III + 4 CO2. It participates in porphyrin-containing compound metabolism; protoporphyrin-IX biosynthesis; coproporphyrinogen-III from 5-aminolevulinate: step 4/4. In terms of biological role, catalyzes the decarboxylation of four acetate groups of uroporphyrinogen-III to yield coproporphyrinogen-III. The polypeptide is Uroporphyrinogen decarboxylase (Helicobacter acinonychis (strain Sheeba)).